A 239-amino-acid polypeptide reads, in one-letter code: Ribosomal RNA small subunit methyltransferase G (239 aa).

S-adenosyl-L-methionine is bound by residues glycine 79, phenylalanine 84, 130–131, and arginine 149; that span reads AE.

It belongs to the methyltransferase superfamily. RNA methyltransferase RsmG family.

It localises to the cytoplasm. In terms of biological role, specifically methylates the N7 position of a guanine in 16S rRNA. In Lactobacillus delbrueckii subsp. bulgaricus (strain ATCC 11842 / DSM 20081 / BCRC 10696 / JCM 1002 / NBRC 13953 / NCIMB 11778 / NCTC 12712 / WDCM 00102 / Lb 14), this protein is Ribosomal RNA small subunit methyltransferase G.